Reading from the N-terminus, the 359-residue chain is Putative transposase y4uE (359 aa).

2 disordered regions span residues 1–31 (MGDG…APGG) and 318–359 (HYAH…EEAA).

The protein belongs to the transposase 9 family.

The polypeptide is Putative transposase y4uE (Sinorhizobium fredii (strain NBRC 101917 / NGR234)).